Reading from the N-terminus, the 116-residue chain is Putative anti-sigma factor antagonist BtrV (116 aa).

An STAS domain is found at 1-110 (MKLTMDKIDG…NSREAAAAAF (110 aa)). A Phosphoserine; by BtrW modification is found at Ser55.

Belongs to the anti-sigma-factor antagonist family. Interacts with BtrW. In terms of processing, phosphorylated by BtrW. Dephosphorylated by BtrU.

Its function is as follows. Possible positive regulator of sigma-B activity. Non-phosphorylated BtrV binds to BtrW, preventing its association with an unknown partner(s) that might be sigma-B. When phosphorylated, releases BtrW, which is then free to complex with and inactivate its partner. Involved in type III secretion system (T3SS). The chain is Putative anti-sigma factor antagonist BtrV (btrV) from Bordetella bronchiseptica (strain ATCC BAA-588 / NCTC 13252 / RB50) (Alcaligenes bronchisepticus).